The primary structure comprises 713 residues: Ribosomal RNA large subunit methyltransferase K/L (713 aa).

Positions leucine 43–phenylalanine 154 constitute a THUMP domain.

Belongs to the methyltransferase superfamily. RlmKL family.

Its subcellular location is the cytoplasm. The enzyme catalyses guanosine(2445) in 23S rRNA + S-adenosyl-L-methionine = N(2)-methylguanosine(2445) in 23S rRNA + S-adenosyl-L-homocysteine + H(+). It carries out the reaction guanosine(2069) in 23S rRNA + S-adenosyl-L-methionine = N(2)-methylguanosine(2069) in 23S rRNA + S-adenosyl-L-homocysteine + H(+). In terms of biological role, specifically methylates the guanine in position 2445 (m2G2445) and the guanine in position 2069 (m7G2069) of 23S rRNA. The sequence is that of Ribosomal RNA large subunit methyltransferase K/L from Shewanella sp. (strain MR-7).